The primary structure comprises 148 residues: Protein ADM2 (148 aa).

A signal peptide spans 1 to 24 (MARIPTAALGCISLLCLQLPGSLS). Positions 25 to 98 (RSLGGDPRPV…HSGPRRHSGP (74 aa)) are excised as a propeptide. Disordered regions lie at residues 26 to 57 (SLGG…APRP) and 70 to 101 (RGAG…PRRT). Cys110 and Cys115 are oxidised to a cystine. At Tyr147 the chain carries Tyrosine amide.

Belongs to the adrenomedullin family. Expressed in the esophagus, stomach, jejunum, ileum, ileocecum, ascending colon, transverse colon, descending colon and rectum. Expressed in myocardial cells of the heart, renal tubular cells, hypothalamus, and pituitary.

It localises to the secreted. In terms of biological role, intermedin/ADM2 is a peptide hormone that plays a role as physiological regulator of gastrointestinal and cardiovascular bioactivities mediated by the CALCRL-RAMPs receptor complexes. Activates the cAMP-dependent pathway through interaction with CALCRL-RAMP3 receptor complex. In Homo sapiens (Human), this protein is Protein ADM2.